Reading from the N-terminus, the 758-residue chain is ATP-dependent RNA helicase dbp7 (758 aa).

2 disordered regions span residues 28-98 (TWRD…NQPR) and 110-130 (EPQK…KPTN). Basic residues predominate over residues 35-45 (AKKIAKHHAKG). Residues 84–98 (GKQQSHGHPHSNQPR) are compositionally biased toward polar residues. The segment covering 110–125 (EPQKAEEVKEEGHVEN) has biased composition (basic and acidic residues). The short motif at 138–167 (DTFTNLGLSPNLAAHLLTKLELKAPTAIQK) is the Q motif element. Residues 171–372 (SQLLKEEGDA…EISLKDAVHI (202 aa)) form the Helicase ATP-binding domain. 184–191 (AETGSGKT) is a binding site for ATP. The DEAD box signature appears at 308–311 (DEGD). The 223-residue stretch at 398-620 (QLKQSYAVVA…NVESGNKDWE (223 aa)) folds into the Helicase C-terminal domain. Basic and acidic residues-rich tracts occupy residues 455 to 471 (KEDG…EEKP) and 697 to 709 (GKEE…KAER). Disordered regions lie at residues 455–483 (KEDG…APAT) and 697–745 (GKEE…RAKM).

Belongs to the DEAD box helicase family. DDX31/DBP7 subfamily.

It localises to the nucleus. The protein resides in the nucleolus. It carries out the reaction ATP + H2O = ADP + phosphate + H(+). Its function is as follows. ATP-binding RNA helicase involved in the biogenesis of 60S ribosomal subunits and is required for the normal formation of 25S and 5.8S rRNAs. The sequence is that of ATP-dependent RNA helicase dbp7 (dbp7) from Aspergillus fumigatus (strain ATCC MYA-4609 / CBS 101355 / FGSC A1100 / Af293) (Neosartorya fumigata).